A 244-amino-acid polypeptide reads, in one-letter code: Phosphoadenosine 5'-phosphosulfate reductase (244 aa).

Cys-239 serves as the catalytic Nucleophile; cysteine thiosulfonate intermediate.

Belongs to the PAPS reductase family. CysH subfamily.

It is found in the cytoplasm. The catalysed reaction is [thioredoxin]-disulfide + sulfite + adenosine 3',5'-bisphosphate + 2 H(+) = [thioredoxin]-dithiol + 3'-phosphoadenylyl sulfate. It participates in sulfur metabolism; hydrogen sulfide biosynthesis; sulfite from sulfate: step 3/3. In terms of biological role, catalyzes the formation of sulfite from phosphoadenosine 5'-phosphosulfate (PAPS) using thioredoxin as an electron donor. The polypeptide is Phosphoadenosine 5'-phosphosulfate reductase (Photorhabdus laumondii subsp. laumondii (strain DSM 15139 / CIP 105565 / TT01) (Photorhabdus luminescens subsp. laumondii)).